Consider the following 392-residue polypeptide: Probable myosin light chain kinase DDB_G0271550 (392 aa).

Residues 20–278 enclose the Protein kinase domain; sequence YEFGPEIGRG…ASQCIKHPWL (259 aa). Residues 26–34 and lysine 49 contribute to the ATP site; that span reads IGRGAFSIV. Aspartate 142 (proton acceptor) is an active-site residue. The span at 317–326 shows a compositional bias: polar residues; the sequence is SQSTPNLHSA. Residues 317 to 392 are disordered; it reads SQSTPNLHSA…NNNNNNNNNI (76 aa). A compositionally biased stretch (low complexity) spans 327-392; that stretch reads NSNTNTNSLS…NNNNNNNNNI (66 aa).

The protein belongs to the protein kinase superfamily. CAMK Ser/Thr protein kinase family. CaMK subfamily.

The enzyme catalyses L-seryl-[myosin light chain] + ATP = O-phospho-L-seryl-[myosin light chain] + ADP + H(+). It carries out the reaction L-threonyl-[myosin light chain] + ATP = O-phospho-L-threonyl-[myosin light chain] + ADP + H(+). In terms of biological role, may phosphorylate a specific serine in the N-terminus of a myosin light chain. The polypeptide is Probable myosin light chain kinase DDB_G0271550 (Dictyostelium discoideum (Social amoeba)).